The primary structure comprises 136 residues: Phospholipase A2 (136 aa).

3 residues coordinate Ca(2+): W8, G10, and G12. Cystine bridges form between C9–C31, C30–C70, C37–C63, C61–C95, and C105–C115. N-linked (GlcNAc...) asparagine glycosylation is present at N16. Residue H34 is part of the active site. Position 35 (D35) interacts with Ca(2+). D64 is an active-site residue.

It belongs to the phospholipase A2 family. Ca(2+) serves as cofactor. As to expression, expressed by the venom gland.

The protein resides in the secreted. The enzyme catalyses a 1,2-diacyl-sn-glycero-3-phosphocholine + H2O = a 1-acyl-sn-glycero-3-phosphocholine + a fatty acid + H(+). Functionally, PLA2 catalyzes the calcium-dependent hydrolysis of the 2-acyl groups in 3-sn-phosphoglycerides. The sequence is that of Phospholipase A2 from Bombus pensylvanicus (American bumblebee).